We begin with the raw amino-acid sequence, 110 residues long: MNTQNIVEKTHEKFSSTWSYLEQTSTDLKQNLRSRLLGLDSLLRELYKQETDEKKKMYIFYALMYVDSALDNLDYMNPEHDPFAVFQAKWAVQKAFEIFSDLFKDYFKSD.

This is an uncharacterized protein from Acidianus convivator (ABV).